Reading from the N-terminus, the 538-residue chain is Putative cysteine ligase BshC (538 aa).

A coiled-coil region spans residues 460–484; the sequence is KINEQIELLERMLKRNVEKKHEVEL.

This sequence belongs to the BshC family.

Its function is as follows. Involved in bacillithiol (BSH) biosynthesis. May catalyze the last step of the pathway, the addition of cysteine to glucosamine malate (GlcN-Mal) to generate BSH. The sequence is that of Putative cysteine ligase BshC from Bacillus anthracis (strain A0248).